A 390-amino-acid chain; its full sequence is GTPase Obg (390 aa).

Residues 1–159 (MKFVDEATIL…RELTLELLLL (159 aa)) form the Obg domain. The segment at 128–147 (SRFKSSVNRAPRQKTNGTKG) is disordered. The span at 129–145 (RFKSSVNRAPRQKTNGT) shows a compositional bias: polar residues. The 174-residue stretch at 160–333 (ADVGMLGLPN…LCWDVMNFLK (174 aa)) folds into the OBG-type G domain. GTP is bound by residues 166–173 (GLPNAGKS), 191–195 (FTTLV), 213–216 (DIPG), 283–286 (NKVD), and 314–316 (SAA). Residues Ser-173 and Thr-193 each coordinate Mg(2+).

Belongs to the TRAFAC class OBG-HflX-like GTPase superfamily. OBG GTPase family. In terms of assembly, monomer. It depends on Mg(2+) as a cofactor.

It is found in the cytoplasm. Its function is as follows. An essential GTPase which binds GTP, GDP and possibly (p)ppGpp with moderate affinity, with high nucleotide exchange rates and a fairly low GTP hydrolysis rate. Plays a role in control of the cell cycle, stress response, ribosome biogenesis and in those bacteria that undergo differentiation, in morphogenesis control. In Pectobacterium atrosepticum (strain SCRI 1043 / ATCC BAA-672) (Erwinia carotovora subsp. atroseptica), this protein is GTPase Obg.